A 103-amino-acid polypeptide reads, in one-letter code: Large ribosomal subunit protein bL21 (103 aa).

It belongs to the bacterial ribosomal protein bL21 family. In terms of assembly, part of the 50S ribosomal subunit. Contacts protein L20.

This protein binds to 23S rRNA in the presence of protein L20. The sequence is that of Large ribosomal subunit protein bL21 from Histophilus somni (strain 129Pt) (Haemophilus somnus).